The following is a 354-amino-acid chain: Uroporphyrinogen decarboxylase (354 aa).

Residues 27 to 31 (RQAGR), F46, D77, Y154, T209, and H327 contribute to the substrate site.

This sequence belongs to the uroporphyrinogen decarboxylase family. Homodimer.

The protein localises to the cytoplasm. The catalysed reaction is uroporphyrinogen III + 4 H(+) = coproporphyrinogen III + 4 CO2. It functions in the pathway porphyrin-containing compound metabolism; protoporphyrin-IX biosynthesis; coproporphyrinogen-III from 5-aminolevulinate: step 4/4. Its function is as follows. Catalyzes the decarboxylation of four acetate groups of uroporphyrinogen-III to yield coproporphyrinogen-III. In Pseudomonas putida (strain ATCC 47054 / DSM 6125 / CFBP 8728 / NCIMB 11950 / KT2440), this protein is Uroporphyrinogen decarboxylase.